Consider the following 306-residue polypeptide: Curved DNA-binding protein (306 aa).

Residues Asp-5–Trp-69 form the J domain.

It localises to the cytoplasm. It is found in the nucleoid. DNA-binding protein that preferentially recognizes a curved DNA sequence. It is probably a functional analog of DnaJ; displays overlapping activities with DnaJ, but functions under different conditions, probably acting as a molecular chaperone in an adaptive response to environmental stresses other than heat shock. Lacks autonomous chaperone activity; binds native substrates and targets them for recognition by DnaK. Its activity is inhibited by the binding of CbpM. The polypeptide is Curved DNA-binding protein (Escherichia coli (strain K12 / MC4100 / BW2952)).